Here is a 205-residue protein sequence, read N- to C-terminus: DNA-directed RNA polymerase RPB5 homolog (205 aa).

This sequence belongs to the archaeal RpoH/eukaryotic RPB5 RNA polymerase subunit family. As to quaternary structure, part of the viral DNA-directed RNA polymerase that consists of 8 polII-like subunits (RPB1, RPB2, RPB3, RPB5, RPB6, RPB7, RPB9, RPB10), a capping enzyme and a termination factor.

Its subcellular location is the host cytoplasm. It is found in the virion. In terms of biological role, component of the DNA-directed RNA polymerase (RNAP) that catalyzes the transcription in the cytoplasm of viral DNA into RNA using the four ribonucleoside triphosphates as substrates. This is DNA-directed RNA polymerase RPB5 homolog from Ornithodoros (relapsing fever ticks).